The chain runs to 736 residues: RNA-binding protein RMD9-like, mitochondrial (736 aa).

Disordered stretches follow at residues 1–28 (MFRF…KTNS), 124–148 (PRRS…HPNT), and 566–618 (NRGI…GTPV). A mitochondrion-targeting transit peptide spans 1 to 79 (MFRFAQPANV…HFKNQFSSRN (79 aa)). Positions 125-140 (RRSNMRNNGNNNMNNG) are enriched in low complexity. Residues 566-578 (NRGISSSSPMSAV) show a composition bias toward polar residues. The span at 579 to 596 (NSLAPSTTNTPSPSLSPI) shows a compositional bias: low complexity. The span at 602–613 (LSSARNTPNKIW) shows a compositional bias: polar residues.

It belongs to the RMD9 family. In terms of assembly, monomer. Post-translationally, phosphorylated. Phosphorylation promotes binding to RNA.

The protein resides in the mitochondrion inner membrane. Functionally, may be involved in the processing or stability of mitochondrial mRNAs. This Candida glabrata (strain ATCC 2001 / BCRC 20586 / JCM 3761 / NBRC 0622 / NRRL Y-65 / CBS 138) (Yeast) protein is RNA-binding protein RMD9-like, mitochondrial.